Here is a 1383-residue protein sequence, read N- to C-terminus: DNA-directed RNA polymerase subunit beta (1383 aa).

The protein belongs to the RNA polymerase beta chain family. In terms of assembly, the RNAP catalytic core consists of 2 alpha, 1 beta, 1 beta' and 1 omega subunit. When a sigma factor is associated with the core the holoenzyme is formed, which can initiate transcription.

It carries out the reaction RNA(n) + a ribonucleoside 5'-triphosphate = RNA(n+1) + diphosphate. DNA-dependent RNA polymerase catalyzes the transcription of DNA into RNA using the four ribonucleoside triphosphates as substrates. In Xanthomonas euvesicatoria pv. vesicatoria (strain 85-10) (Xanthomonas campestris pv. vesicatoria), this protein is DNA-directed RNA polymerase subunit beta.